Reading from the N-terminus, the 170-residue chain is Macro domain-containing protein DR_2288 (170 aa).

The Macro domain maps to 1 to 170; sequence MPLELVQGDI…HVFERALAQL (170 aa).

It belongs to the MacroD-type family.

This is Macro domain-containing protein DR_2288 from Deinococcus radiodurans (strain ATCC 13939 / DSM 20539 / JCM 16871 / CCUG 27074 / LMG 4051 / NBRC 15346 / NCIMB 9279 / VKM B-1422 / R1).